Reading from the N-terminus, the 147-residue chain is Large ribosomal subunit protein uL13 (147 aa).

Positions 128 to 147 (PEHPHSAQQPVPYELKQVAQ) are disordered.

The protein belongs to the universal ribosomal protein uL13 family. Part of the 50S ribosomal subunit.

This protein is one of the early assembly proteins of the 50S ribosomal subunit, although it is not seen to bind rRNA by itself. It is important during the early stages of 50S assembly. This chain is Large ribosomal subunit protein uL13, found in Mycobacterium bovis (strain BCG / Pasteur 1173P2).